The primary structure comprises 311 residues: HPr kinase/phosphorylase (311 aa).

Catalysis depends on residues His138 and Lys159. 153-160 (GDSGIGKS) contacts ATP. Residue Ser160 participates in Mg(2+) binding. The active-site Proton acceptor; for phosphorylation activity. Proton donor; for dephosphorylation activity is Asp177. An important for the catalytic mechanism of both phosphorylation and dephosphorylation region spans residues 201 to 210 (LEIRGVGIID). Glu202 contacts Mg(2+). The active site involves Arg243. Residues 264 to 269 (PVKTGR) are important for the catalytic mechanism of dephosphorylation.

The protein belongs to the HPrK/P family. Homohexamer. Requires Mg(2+) as cofactor.

It catalyses the reaction [HPr protein]-L-serine + ATP = [HPr protein]-O-phospho-L-serine + ADP + H(+). The catalysed reaction is [HPr protein]-O-phospho-L-serine + phosphate + H(+) = [HPr protein]-L-serine + diphosphate. Its function is as follows. Catalyzes the ATP- as well as the pyrophosphate-dependent phosphorylation of a specific serine residue in HPr, a phosphocarrier protein of the phosphoenolpyruvate-dependent sugar phosphotransferase system (PTS). HprK/P also catalyzes the pyrophosphate-producing, inorganic phosphate-dependent dephosphorylation (phosphorolysis) of seryl-phosphorylated HPr (P-Ser-HPr). The two antagonistic activities of HprK/P are regulated by several intracellular metabolites, which change their concentration in response to the absence or presence of rapidly metabolisable carbon sources (glucose, fructose, etc.) in the growth medium. Therefore, by controlling the phosphorylation state of HPr, HPrK/P is a sensor enzyme that plays a major role in the regulation of carbon metabolism and sugar transport: it mediates carbon catabolite repression (CCR), and regulates PTS-catalyzed carbohydrate uptake and inducer exclusion. The sequence is that of HPr kinase/phosphorylase from Streptococcus agalactiae serotype Ia (strain ATCC 27591 / A909 / CDC SS700).